The sequence spans 481 residues: Rhamnogalacturonan I rhamnosyltransferase 4 (481 aa).

The chain crosses the membrane as a helical; Signal-anchor for type II membrane protein span at residues 33-55 (VWFFRVCSCILVWTCLIQLFWHS). N-linked (GlcNAc...) asparagine glycosylation is found at N85 and N118. A substrate-binding site is contributed by 258–260 (HLR). Residues N372 and N432 are each glycosylated (N-linked (GlcNAc...) asparagine).

Belongs to the glycosyltransferase GT106 family.

It localises to the golgi apparatus membrane. It carries out the reaction alpha-D-galacturonosyl-[(1-&gt;2)-alpha-L-rhamnosyl-(1-&gt;4)-alpha-D-galacturonosyl](n) + UDP-beta-L-rhamnose = [(1-&gt;2)-alpha-L-rhamnosyl-(1-&gt;4)-alpha-D-galacturonosyl](n+1) + UDP + H(+). It participates in glycan metabolism; pectin biosynthesis. Functionally, glycosyltransferase involved in the formation of rhamnogalacturonan I (RG-I) oligosaccharides in the seed coat mucilage, which is a specialized cell wall with abundant RG-I. Transfers the rhamnose residue from UDP-beta-L-rhamnose to RG-I oligosaccharides. This Arabidopsis thaliana (Mouse-ear cress) protein is Rhamnogalacturonan I rhamnosyltransferase 4.